Consider the following 472-residue polypeptide: ATP synthase subunit beta (472 aa).

An ATP-binding site is contributed by 155-162; it reads GGAGVGKT.

It belongs to the ATPase alpha/beta chains family. As to quaternary structure, F-type ATPases have 2 components, CF(1) - the catalytic core - and CF(0) - the membrane proton channel. CF(1) has five subunits: alpha(3), beta(3), gamma(1), delta(1), epsilon(1). CF(0) has three main subunits: a(1), b(2) and c(9-12). The alpha and beta chains form an alternating ring which encloses part of the gamma chain. CF(1) is attached to CF(0) by a central stalk formed by the gamma and epsilon chains, while a peripheral stalk is formed by the delta and b chains.

It is found in the cell inner membrane. It catalyses the reaction ATP + H2O + 4 H(+)(in) = ADP + phosphate + 5 H(+)(out). Functionally, produces ATP from ADP in the presence of a proton gradient across the membrane. The catalytic sites are hosted primarily by the beta subunits. The polypeptide is ATP synthase subunit beta (Fervidobacterium nodosum (strain ATCC 35602 / DSM 5306 / Rt17-B1)).